Consider the following 553-residue polypeptide: MGKQVYLHIFNAKILDVFNQRFEDTELWIDNGSIYFRGKSKDLTAKNNFNAEGNYIVPGLIDAHLHIESSLLAPSELAKLELRHGVTSIFADPHEIGSVSGVSGLFYMIQEARNTPLHIHYMLPSSVPATNFEHAGAVLHADALKPFYGFPEINGLAEVMDFPAVANGDPDMLEKIRDAQAAGHHADGHGAGLTREQLAVYRAVGIDTDHESTSGKEALERIQAGMKVFIREGTVERDEKSILPVVRKNNQSYFSFCTDDKSAIDIQKEGSVDNNVRLAISKGIPAERAFTMASYNAAVAQHVKNVGALTDGFIADLVIISNLDNFVTEKVMTEGNWVDKLESKVTTFTSPAVNAELSLNDLKLPLKSDKAHVINIQPEHITTKHTIESVNRDQQGNFVADQDYAKIIVAERYHNLGHGLGIIHGFNMQEGAIGSTIAHDSHNMIIAGVDDKPMIIAYDRLKRMGGGMILVDKNGFTRELPLEIAGLMSDKPYQEVIAKQKSLKGAFAKISKGIDFDPFLTLSFMALPVIPSLKITDQGLFDFDQFKFIDINA.

It belongs to the metallo-dependent hydrolases superfamily. Adenine deaminase family. Mn(2+) is required as a cofactor.

It catalyses the reaction adenine + H2O + H(+) = hypoxanthine + NH4(+). The protein is Adenine deaminase 1 of Oenococcus oeni (strain ATCC BAA-331 / PSU-1).